The chain runs to 376 residues: Ribonuclease D (376 aa).

In terms of domain architecture, 3'-5' exonuclease spans 8-176; sequence IQWIRDDASL…VYLALDARLS (169 aa). Residues 214–294 enclose the HRDC domain; that stretch reads RPQQLAVLRE…AEAARLPQSE (81 aa).

The protein belongs to the RNase D family. It depends on a divalent metal cation as a cofactor.

The protein resides in the cytoplasm. It catalyses the reaction Exonucleolytic cleavage that removes extra residues from the 3'-terminus of tRNA to produce 5'-mononucleotides.. In terms of biological role, exonuclease involved in the 3' processing of various precursor tRNAs. Initiates hydrolysis at the 3'-terminus of an RNA molecule and releases 5'-mononucleotides. The chain is Ribonuclease D from Pseudomonas paraeruginosa (strain DSM 24068 / PA7) (Pseudomonas aeruginosa (strain PA7)).